Here is a 178-residue protein sequence, read N- to C-terminus: Large ribosomal subunit protein uL6 (178 aa).

It belongs to the universal ribosomal protein uL6 family. Part of the 50S ribosomal subunit.

This protein binds to the 23S rRNA, and is important in its secondary structure. It is located near the subunit interface in the base of the L7/L12 stalk, and near the tRNA binding site of the peptidyltransferase center. The polypeptide is Large ribosomal subunit protein uL6 (Limosilactobacillus reuteri (strain DSM 20016) (Lactobacillus reuteri)).